A 238-amino-acid polypeptide reads, in one-letter code: Isoamyl acetate-hydrolyzing esterase (238 aa).

Serine 12 acts as the Nucleophile in catalysis. The Proton donor role is filled by aspartate 187. Residue histidine 190 is the Proton acceptor of the active site.

Belongs to the 'GDSL' lipolytic enzyme family. IAH1 subfamily. As to quaternary structure, homodimer.

It carries out the reaction 3-methylbutyl acetate + H2O = 3-methylbutanol + acetate + H(+). In terms of biological role, plays a crucial role in the hydrolysis of isoamyl acetate in sake mash. Hydrolyzes short chain esters from acetate (C2) to hexanoate (C6), showing more specificity for shorter chain exters. No activity for decanoate (C10) esters. The polypeptide is Isoamyl acetate-hydrolyzing esterase (Saccharomyces cerevisiae (strain ATCC 204508 / S288c) (Baker's yeast)).